We begin with the raw amino-acid sequence, 177 residues long: Large ribosomal subunit protein uL10 (177 aa).

The protein belongs to the universal ribosomal protein uL10 family. In terms of assembly, part of the ribosomal stalk of the 50S ribosomal subunit. The N-terminus interacts with L11 and the large rRNA to form the base of the stalk. The C-terminus forms an elongated spine to which L12 dimers bind in a sequential fashion forming a multimeric L10(L12)X complex.

Forms part of the ribosomal stalk, playing a central role in the interaction of the ribosome with GTP-bound translation factors. In Thermoanaerobacter sp. (strain X514), this protein is Large ribosomal subunit protein uL10.